The primary structure comprises 96 residues: Essential MCU regulator, mitochondrial (96 aa).

The N-terminal 34 residues, 1–34 (MIVSRLTFPLQAAKLVARKAAGNPSNSIIQRRHM), are a transit peptide targeting the mitochondrion. Residues 52–72 (PFGLFAIFCAVIPGLFIGATI) form a helical membrane-spanning segment.

It belongs to the SMDT1/EMRE family.

It localises to the mitochondrion inner membrane. In terms of biological role, essential regulatory subunit of the mitochondrial calcium uniporter (mcu) channel, a protein that mediates calcium uptake into mitochondria. The sequence is that of Essential MCU regulator, mitochondrial from Drosophila pseudoobscura pseudoobscura (Fruit fly).